A 1127-amino-acid chain; its full sequence is Disease resistance protein RPS6 (1127 aa).

An N-acetylmethionine modification is found at M1. The 165-residue stretch at 12-176 folds into the TIR domain; the sequence is WSYHVFPSFS…EIANDILGKM (165 aa). Residue E87 is part of the active site. The NB-ARC domain maps to 191 to 452; the sequence is EDHITKMSSL…HIACIFNGEK (262 aa). 11 LRR repeats span residues 197–221, 540–563, 587–609, 610–632, 633–656, 658–679, 680–704, 766–790, 791–813, 814–834, and 835–857; these read MSSL…GIGK, IDET…LFLK, PSRL…NFHP, ENLV…VHSL, AGLR…SMAT, LETL…IQYL, NKLN…NLKS, SPTL…IQNL, YQLE…GINL, DSLI…PDIS, and TNIS…IEKL.

Interacts with EDS1. As to expression, ubiquitous.

The catalysed reaction is NAD(+) + H2O = ADP-D-ribose + nicotinamide + H(+). Its function is as follows. Disease resistance (R) protein that specifically recognizes the hopA1 type III effector avirulence protein from Pseudomonas syringae. Resistance proteins guard the plant against pathogens that contain an appropriate avirulence protein via an indirect interaction with this avirulence protein. That triggers a defense system including the hypersensitive response, which restricts the pathogen growth. This is Disease resistance protein RPS6 (RPS6) from Arabidopsis thaliana (Mouse-ear cress).